The sequence spans 93 residues: MKECVPVKTFESLFAELTERAATRPEGSGTVAALDAGVHAQGKKVIEEAGEVWIAAEYQSDEQLAEEISQLLYWTQVLMVGRGLTLEDVYRHL.

It belongs to the PRA-PH family.

It localises to the cytoplasm. The catalysed reaction is 1-(5-phospho-beta-D-ribosyl)-ATP + H2O = 1-(5-phospho-beta-D-ribosyl)-5'-AMP + diphosphate + H(+). Its pathway is amino-acid biosynthesis; L-histidine biosynthesis; L-histidine from 5-phospho-alpha-D-ribose 1-diphosphate: step 2/9. The protein is Phosphoribosyl-ATP pyrophosphatase of Rhodococcus erythropolis (strain PR4 / NBRC 100887).